Reading from the N-terminus, the 249-residue chain is Triosephosphate isomerase (249 aa).

Residues asparagine 12 and lysine 14 each contribute to the substrate site. Residue lysine 14 is modified to N6-acetyllysine. Residue asparagine 16 is modified to Deamidated asparagine. Position 68 is a 3'-nitrotyrosine (tyrosine 68). A Deamidated asparagine modification is found at asparagine 72. Serine 80 bears the Phosphoserine mark. Histidine 96 serves as the catalytic Electrophile. Phosphoserine is present on serine 106. Lysine 142 participates in a covalent cross-link: Glycyl lysine isopeptide (Lys-Gly) (interchain with G-Cter in SUMO1). Lysine 149 is modified (N6-succinyllysine). Residue lysine 156 is modified to N6-acetyllysine; alternate. Lysine 156 carries the N6-succinyllysine; alternate modification. Serine 159 bears the Phosphoserine mark. Catalysis depends on glutamate 166, which acts as the Proton acceptor. The residue at position 173 (threonine 173) is a Phosphothreonine. N6-acetyllysine; alternate is present on lysine 194. Residue lysine 194 is modified to N6-succinyllysine; alternate. Lysine 194 is modified (N6-methyllysine; alternate). Residue serine 198 is modified to Phosphoserine. Tyrosine 209 carries the 3'-nitrotyrosine modification. At serine 212 the chain carries Phosphoserine. Phosphothreonine is present on threonine 214. A Phosphoserine modification is found at serine 223. Lysine 238 carries the N6-acetyllysine modification.

It belongs to the triosephosphate isomerase family. In terms of assembly, homodimer. Post-translationally, asn-16 and Asn-72 undergo deamidation which gives rise to four extra negative charges. These are expected to decrease subunit-subunit interactions and so expose the hydrophobic interface to the aqueous environment.

The protein resides in the cytoplasm. It catalyses the reaction D-glyceraldehyde 3-phosphate = dihydroxyacetone phosphate. The enzyme catalyses dihydroxyacetone phosphate = methylglyoxal + phosphate. It functions in the pathway carbohydrate degradation; glycolysis; D-glyceraldehyde 3-phosphate from glycerone phosphate: step 1/1. It participates in carbohydrate biosynthesis; gluconeogenesis. Functionally, triosephosphate isomerase is an extremely efficient metabolic enzyme that catalyzes the interconversion between dihydroxyacetone phosphate (DHAP) and D-glyceraldehyde-3-phosphate (G3P) in glycolysis and gluconeogenesis. It is also responsible for the non-negligible production of methylglyoxal a reactive cytotoxic side-product that modifies and can alter proteins, DNA and lipids. The sequence is that of Triosephosphate isomerase (TPI1) from Oryctolagus cuniculus (Rabbit).